Reading from the N-terminus, the 342-residue chain is Elongation factor Ts (342 aa).

The involved in Mg(2+) ion dislocation from EF-Tu stretch occupies residues 80–83 (TDFV).

This sequence belongs to the EF-Ts family.

It localises to the cytoplasm. Associates with the EF-Tu.GDP complex and induces the exchange of GDP to GTP. It remains bound to the aminoacyl-tRNA.EF-Tu.GTP complex up to the GTP hydrolysis stage on the ribosome. The chain is Elongation factor Ts from Lactobacillus delbrueckii subsp. bulgaricus (strain ATCC 11842 / DSM 20081 / BCRC 10696 / JCM 1002 / NBRC 13953 / NCIMB 11778 / NCTC 12712 / WDCM 00102 / Lb 14).